A 573-amino-acid polypeptide reads, in one-letter code: Putative ferric-chelate reductase 1 (573 aa).

A helical transmembrane segment spans residues 4–24 (VCKSPQRLLFVLVSCFGLVQS). Residues 15–181 (LVSCFGLVQS…GTTGTSTTPA (167 aa)) enclose the Reelin domain. The DOMON domain occupies 213–328 (GCYFVAVQAS…NEYYLMIAAG (116 aa)). Residues asparagine 286 and asparagine 300 are each glycosylated (N-linked (GlcNAc...) asparagine). Positions 332 to 532 (QGNIQFHTNK…YILQDLNLRA (201 aa)) constitute a Cytochrome b561 domain. A helical membrane pass occupies residues 369–389 (AHGCLMLISWMATGSIGMIIA). Heme b is bound by residues histidine 370 and histidine 411. The next 2 membrane-spanning stretches (helical) occupy residues 414 to 434 (LMTL…VSAG) and 441 to 461 (HPVL…VAAF). Residues histidine 441 and histidine 477 each coordinate heme b. 3 consecutive transmembrane segments (helical) span residues 479–499 (CNAF…LALF), 506–526 (GWML…YILQ), and 550–570 (ILLF…LVGI).

Belongs to the FRRS1 family. Heme b serves as cofactor.

Its subcellular location is the membrane. In terms of biological role, putative ferric-chelate reductases reduce Fe(3+) to Fe(2+) before its transport from the endosome to the cytoplasm. The protein is Putative ferric-chelate reductase 1 (frrs1) of Danio rerio (Zebrafish).